Here is a 205-residue protein sequence, read N- to C-terminus: Large ribosomal subunit protein bL25 (205 aa).

Belongs to the bacterial ribosomal protein bL25 family. CTC subfamily. Part of the 50S ribosomal subunit; part of the 5S rRNA/L5/L18/L25 subcomplex. Contacts the 5S rRNA. Binds to the 5S rRNA independently of L5 and L18.

In terms of biological role, this is one of the proteins that binds to the 5S RNA in the ribosome where it forms part of the central protuberance. This Bartonella bacilliformis (strain ATCC 35685 / KC583 / Herrer 020/F12,63) protein is Large ribosomal subunit protein bL25.